Consider the following 141-residue polypeptide: ATP synthase epsilon chain (141 aa).

It belongs to the ATPase epsilon chain family. In terms of assembly, F-type ATPases have 2 components, CF(1) - the catalytic core - and CF(0) - the membrane proton channel. CF(1) has five subunits: alpha(3), beta(3), gamma(1), delta(1), epsilon(1). CF(0) has three main subunits: a, b and c.

The protein resides in the cell inner membrane. Produces ATP from ADP in the presence of a proton gradient across the membrane. The polypeptide is ATP synthase epsilon chain (Pseudomonas fluorescens (strain ATCC BAA-477 / NRRL B-23932 / Pf-5)).